We begin with the raw amino-acid sequence, 1085 residues long: Carbamoyl phosphate synthase large chain (1085 aa).

The interval 1 to 399 (MPKRTDISNI…ALQKALCSLE (399 aa)) is carboxyphosphate synthetic domain. 11 residues coordinate ATP: Arg127, Arg167, Gly174, Glu206, Leu208, Glu213, Gly239, Val240, His241, Gln283, and Glu297. The ATP-grasp 1 domain occupies 131-326 (KEAMLKIGMD…IAKVATMLAV (196 aa)). Residues Gln283, Glu297, and Asn299 each contribute to the Mg(2+) site. 3 residues coordinate Mn(2+): Gln283, Glu297, and Asn299. The tract at residues 400-551 (NNWLGFESLS…YAPNPLPPIG (152 aa)) is oligomerization domain. The carbamoyl phosphate synthetic domain stretch occupies residues 552–951 (NKQEKQEKKI…AFFKAQTACF (400 aa)). The ATP-grasp 2 domain maps to 678–871 (SLFLKELDIK…LAKVATRVMV (194 aa)). ATP is bound by residues Arg714, Lys756, Leu758, Glu763, Gly788, Ile789, His790, Ser791, Gln830, and Glu842. Gln830, Glu842, and Asn844 together coordinate Mg(2+). Gln830, Glu842, and Asn844 together coordinate Mn(2+). Positions 952–1085 (NPIKNKGLIF…ELLALQDYLK (134 aa)) constitute an MGS-like domain. The interval 952 to 1085 (NPIKNKGLIF…ELLALQDYLK (134 aa)) is allosteric domain.

It belongs to the CarB family. In terms of assembly, composed of two chains; the small (or glutamine) chain promotes the hydrolysis of glutamine to ammonia, which is used by the large (or ammonia) chain to synthesize carbamoyl phosphate. Tetramer of heterodimers (alpha,beta)4. The cofactor is Mg(2+). It depends on Mn(2+) as a cofactor.

It carries out the reaction hydrogencarbonate + L-glutamine + 2 ATP + H2O = carbamoyl phosphate + L-glutamate + 2 ADP + phosphate + 2 H(+). The enzyme catalyses hydrogencarbonate + NH4(+) + 2 ATP = carbamoyl phosphate + 2 ADP + phosphate + 2 H(+). It functions in the pathway amino-acid biosynthesis; L-arginine biosynthesis; carbamoyl phosphate from bicarbonate: step 1/1. It participates in pyrimidine metabolism; UMP biosynthesis via de novo pathway; (S)-dihydroorotate from bicarbonate: step 1/3. Its function is as follows. Large subunit of the glutamine-dependent carbamoyl phosphate synthetase (CPSase). CPSase catalyzes the formation of carbamoyl phosphate from the ammonia moiety of glutamine, carbonate, and phosphate donated by ATP, constituting the first step of 2 biosynthetic pathways, one leading to arginine and/or urea and the other to pyrimidine nucleotides. The large subunit (synthetase) binds the substrates ammonia (free or transferred from glutamine from the small subunit), hydrogencarbonate and ATP and carries out an ATP-coupled ligase reaction, activating hydrogencarbonate by forming carboxy phosphate which reacts with ammonia to form carbamoyl phosphate. The polypeptide is Carbamoyl phosphate synthase large chain (Helicobacter pylori (strain J99 / ATCC 700824) (Campylobacter pylori J99)).